A 180-amino-acid polypeptide reads, in one-letter code: ATP-dependent protease subunit HslV (180 aa).

The active site involves Thr7. Residues Ala165, Cys168, and Thr171 each contribute to the Na(+) site.

Belongs to the peptidase T1B family. HslV subfamily. In terms of assembly, a double ring-shaped homohexamer of HslV is capped on each side by a ring-shaped HslU homohexamer. The assembly of the HslU/HslV complex is dependent on binding of ATP.

The protein localises to the cytoplasm. It catalyses the reaction ATP-dependent cleavage of peptide bonds with broad specificity.. Its activity is regulated as follows. Allosterically activated by HslU binding. In terms of biological role, protease subunit of a proteasome-like degradation complex believed to be a general protein degrading machinery. The sequence is that of ATP-dependent protease subunit HslV from Geobacillus kaustophilus (strain HTA426).